The primary structure comprises 588 residues: Aspartate--tRNA ligase (588 aa).

Glu177 lines the L-aspartate pocket. Positions Gln201–Lys204 are aspartate. Arg223 is an L-aspartate binding site. Residues Arg223–Glu225 and Gln232 contribute to the ATP site. His451 contacts L-aspartate. Glu485 serves as a coordination point for ATP. Arg492 provides a ligand contact to L-aspartate. Residue Gly537–Arg540 coordinates ATP.

It belongs to the class-II aminoacyl-tRNA synthetase family. Type 1 subfamily. As to quaternary structure, homodimer.

It localises to the cytoplasm. The enzyme catalyses tRNA(Asp) + L-aspartate + ATP = L-aspartyl-tRNA(Asp) + AMP + diphosphate. Functionally, catalyzes the attachment of L-aspartate to tRNA(Asp) in a two-step reaction: L-aspartate is first activated by ATP to form Asp-AMP and then transferred to the acceptor end of tRNA(Asp). This chain is Aspartate--tRNA ligase, found in Staphylococcus aureus (strain MRSA252).